We begin with the raw amino-acid sequence, 685 residues long: Putative pentatricopeptide repeat-containing protein At3g08820 (685 aa).

PPR repeat units follow at residues 75–109 (NIFL…GLYL), 110–144 (HGFT…GFNH), 145–175 (DVAA…IPDR), 176–210 (SVVT…GVKP), 211–245 (DSYF…EMQK), 246–276 (NSFV…MVEK), 277–311 (DIVT…NLKP), 312–346 (DQFS…EFLT), 347–381 (NLFM…DIVI), 383–412 (NAAI…GISP), 413–443 (DGST…ISCV), and 449–479 (TVEH…MPMR). A type E motif region spans residues 484 to 559 (VWGALLSGCR…IPGYSWIELE (76 aa)). The segment at 560–590 (GKVHEFLADDKSHPLSDKIYAKLEDLGNEMR) is type E(+) motif. Residues 591-685 (LMGFVPTTEF…NGSCSCNDYW (95 aa)) form a type DYW motif region.

The protein belongs to the PPR family. PCMP-H subfamily.

The protein is Putative pentatricopeptide repeat-containing protein At3g08820 (PCMP-H84) of Arabidopsis thaliana (Mouse-ear cress).